The sequence spans 365 residues: MAEFVRAQIFGTTFEITSRYTDLQPVGMGAFGLVCSARDQLTGQPVAVKKIMKPFSTPVLSKRTYRELKLLKHLRHENIISLSDIFISPLEDIYFVTELLGTDLHRLLTSRPLEKQFIQYFLYQILRGLKYVHSAGVVHRDLKPSNILINENCDLKICDFGLARIQDPQMTGYVSTRYYRAPEIMLTWQKYDVEVDIWSAACIFAEMLEGKPLFPGKDHVNQFSIITELLGTPPDDVIQTICSENTLRFVKSLPKRERQPLASKFKNADPDAVDLLERMLVFDPKKRIRAGEALAHEYLAPYHDPTDEPVAEEKFDWSFNDADLPVDTWKIMYSEILDFHNIDQANDAGQVLVEGAVADGQQAFA.

The Protein kinase domain occupies 20–299 (YTDLQPVGMG…AGEALAHEYL (280 aa)). ATP is bound by residues 26 to 34 (VGMGAFGLV) and Lys49. Asp141 functions as the Proton acceptor in the catalytic mechanism. At Thr171 the chain carries Phosphothreonine. The TXY signature appears at 171 to 173 (TGY). The residue at position 173 (Tyr173) is a Phosphotyrosine.

Belongs to the protein kinase superfamily. Ser/Thr protein kinase family. MAP kinase subfamily. HOG1 sub-subfamily. Mg(2+) is required as a cofactor. In terms of processing, dually phosphorylated on Thr-171 and Tyr-173, which activates the enzyme.

It is found in the cytoplasm. The protein resides in the nucleus. It carries out the reaction L-seryl-[protein] + ATP = O-phospho-L-seryl-[protein] + ADP + H(+). It catalyses the reaction L-threonyl-[protein] + ATP = O-phospho-L-threonyl-[protein] + ADP + H(+). With respect to regulation, activated by tyrosine and threonine phosphorylation. Functionally, proline-directed serine/threonine-protein kinase involved in a signal transduction pathway that is activated by changes in the osmolarity of the extracellular environment. Controls osmotic regulation of transcription of target genes. In Aspergillus niger (strain ATCC MYA-4892 / CBS 513.88 / FGSC A1513), this protein is Mitogen-activated protein kinase hog1 (hog1).